The chain runs to 967 residues: MANRKLEKMASIDVHLRQLVPGKVSEDDKLVEYDALLLDRFLDILQDLHGEDLRETVQELYEHSAEYEGKHEPKKLEELGSVLTSLDPGDSIVIAKAFSHMLNLANLAEEVQIAYRRRIKKLKKGDFVDESSATTESDLEETFKKLVGDLNKSPEEIFDALKNQTVDLVLTAHPTQSVRRSLLQKHGRIRDCLAQLYAKDITPDDKQELDEALQREIQAAFRTDEIKRTPPTPQDEMRAGMSYFHETIWKGVPKFLRRVDTALKNIGIEERVPYNAPLIQFSSWMGGDRDGNPRVTPEVTRDVCLLARMMAATMYFNQIEDLMFEMSMWRCNDELRARADEVHANSRKDAAKHYIEFWKSIPTTEPYRVILGDVRDKLYHTRERAHQLLSNGHSDVPVEATFINLEQFLEPLELCYRSLCSCGDRPIADGSLLDFLRQVSTFGLSLVRLDIRQESDRHTDVLDAITTHLDIGSYREWSEERRQEWLLSELSGKRPLFGSDLPKTEEIADVLDTFHVIAELPADSFGAYIISMATAPSDVLAVELLQRECRVKQPLRVVPLFEKLADLEAAPAAVARLFSVDWYKNRINGKQEVMIGYSDSGKDAGRLSAAWQLYKAQEELVKVAKEYGVKLTMFHGRGGTVGRGGGPTHLAILSQPPDTINGSLRVTVQGEVIEQSFGEEHLCFRTLQRFTAATLEHGMRPPISPKPEWRALLDEMAVVATEEYRSVVFQEPRFVEYFRLATPELEYGRMNIGSRPSKRKPSGGIESLRAIPWIFAWTQTRFHLPVWLGFGSAIRHVIEKDVRNLHMLQDMYQHWPFFRVTIDLIEMVFAKGDPGIAALYDKLLVSEELWPFGEKLRANFEETKKLILQTAGHKDLLEGDPYLKQRLRLRDSYITTLNVCQAYTLKRIRDPSYHVTLRPHISKEIAESSKPAKELIELNPTSEYAPGLEDTLILTMKGIAAGLQNTG.

The residue at position 11 (S11) is a Phosphoserine. Catalysis depends on residues H173 and K602. S704 bears the Phosphoserine mark.

It belongs to the PEPCase type 1 family. As to quaternary structure, homotetramer. Mg(2+) is required as a cofactor. It depends on Mn(2+) as a cofactor. Post-translationally, the phosphorylation of Ser-11 is reversibly promoted by inorganic phosphate (Pi) deprivation. Enhanced activity by phosphorylation at pH 7.3 by lowering Km and sensitivity to inhibition by L-malate and L-aspartate, while enhancing activation by glucose 6-phosphate. Expressed in all plant organs, with higher levels in roots.

The protein resides in the cytoplasm. It catalyses the reaction oxaloacetate + phosphate = phosphoenolpyruvate + hydrogencarbonate. With respect to regulation, by light-reversible phosphorylation. Activated by inorganic phosphate (Pi) deprivation and glucose 6-phosphate. Inhibited by L-malate and L-aspartate. In terms of biological role, through the carboxylation of phosphoenolpyruvate (PEP) it forms oxaloacetate, a four-carbon dicarboxylic acid source for the tricarboxylic acid cycle. Contributes probably to the adaptation to inorganic phosphate (Pi) deprivation. This chain is Phosphoenolpyruvate carboxylase 1 (PPC1), found in Arabidopsis thaliana (Mouse-ear cress).